The sequence spans 327 residues: MQGKVALEEHFAIPETLQDSAGFVPGDYWKELQHRLLDIQDTRLKLMDAHGIETMILSLNAPAVQAIPDRKKAIEIARRANDVLAEECARRPDRFLAFAALPLQDPDAATQELQRCVNDLGFVGALVNGFSQEGDGQTPLYYDLPQYRPFWGEVEKLDVPFYLHPRNPLPQDSRIYDGHPWLLGPTWAFAQETAVHALRLMASGLFDAHPRLNIILGHMGEGLPYMMWRIDHRNAWVKLPPRYPAKRRFVDYFNENFHITTSGNFRTQTLIDAILEIGADRILFSTDWPFENIDHASDWFNATTIAEADRVKIGRTNARRLFKLDGR.

E8, H10, H164, and D287 together coordinate Zn(2+). The active site involves D287.

It belongs to the metallo-dependent hydrolases superfamily. ACMSD family. Homotetramer. Requires Zn(2+) as cofactor.

It carries out the reaction 2,6-dihydroxybenzoate + H(+) = resorcinol + CO2. It catalyses the reaction 2,3-dihydroxybenzoate + H(+) = catechol + CO2. Its pathway is aromatic compound metabolism. Insensitive to oxygen. Decarboxylation and carboxylation are inhibited by AgNO(3) and by diethyl pyrocarbonate, a histidine residue-specific inhibitor. Decarboxylation is also inhibited by HgCl(2) and activated by MgCl(2). In terms of biological role, involved in the gamma-resorcylate (2,6-dihydroxybenzoate) catabolism. Catalyzes the reversible decarboxylation of gamma-resorcylate to resorcinol. Also catalyzes the decarboxylation of 2,3-dihydroxybenzoate to catechol, but does not act on 2-hydroxybenzoic acid 3-hydroxybenzoic acid, 4-hydroxybenzoic acid, 3,4-dihydroxybenzoic acid, 2,5-dihydroxybenzoic acid, 2,3,4-trihydroxybenzoic acid, 3,4,5-trihydroxybenzoic acid, 4-aminobenzoic acid, o-hydroxyphenylacetic acid and vanillic acid. Resorcinol and catechol can both be carboxylated by the reverse reaction. The polypeptide is Gamma-resorcylate decarboxylase (Rhizobium radiobacter (Agrobacterium tumefaciens)).